Here is a 1024-residue protein sequence, read N- to C-terminus: RNA cytidine acetyltransferase (1024 aa).

287 to 296 (GRGKSAALGL) is an ATP binding site. The residue at position 426 (Lys426) is an N6-acetyllysine. Residue Arg470 participates in ATP binding. Positions 558-753 (CLLPPVPPTQ…HSCIMLKTLA (196 aa)) constitute an N-acetyltransferase domain. Acetyl-CoA-binding positions include 629-631 (IAV) and 636-642 (QGMGYGS). Positions 702-1024 (PAERLDYLGV…RKDMKLKRKK (323 aa)) are required for localization to the nucleolus and midbody. Residue Thr716 is modified to Phosphothreonine. Arg725 contacts acetyl-CoA. 3 positions are modified to phosphoserine: Ser934, Ser984, and Ser987. A disordered region spans residues 990–1024 (SDKKRKLETKQEPKQSKKLKKRDNNRKDMKLKRKK). Residues 1005–1024 (SKKLKKRDNNRKDMKLKRKK) are compositionally biased toward basic residues.

The protein belongs to the RNA cytidine acetyltransferase family. NAT10 subfamily. In terms of assembly, part of the small subunit (SSU) processome, composed of more than 70 proteins and the RNA chaperone small nucleolar RNA (snoRNA) U3. Interacts with THUMPD1. Interacts with SUN1 (via N-terminus). Interacts with TERT.

The protein localises to the nucleus. Its subcellular location is the nucleolus. It catalyses the reaction a cytidine in 18S rRNA + acetyl-CoA + ATP + H2O = an N(4)-acetylcytidine in 18S rRNA + ADP + phosphate + CoA + H(+). The enzyme catalyses a cytidine in tRNA + acetyl-CoA + ATP + H2O = an N(4)-acetylcytidine in tRNA + ADP + phosphate + CoA + H(+). The catalysed reaction is a cytidine in mRNA + acetyl-CoA + ATP + H2O = an N(4)-acetylcytidine in mRNA + ADP + phosphate + CoA + H(+). Functionally, RNA cytidine acetyltransferase that catalyzes the formation of N(4)-acetylcytidine (ac4C) modification on mRNAs, 18S rRNA and tRNAs. Catalyzes ac4C modification of a broad range of mRNAs, enhancing mRNA stability and translation. mRNA ac4C modification is frequently present within wobble cytidine sites and promotes translation efficiency. Mediates the formation of ac4C at position 1842 in 18S rRNA. May also catalyze the formation of ac4C at position 1337 in 18S rRNA. Required for early nucleolar cleavages of precursor rRNA at sites A0, A1 and A2 during 18S rRNA synthesis. Catalyzes the formation of ac4C in serine and leucine tRNAs. Requires the tRNA-binding adapter protein THUMPD1 for full tRNA acetyltransferase activity but not for 18S rRNA acetylation. In addition to RNA acetyltransferase activity, also able to acetylate lysine residues of proteins, such as histones, microtubules, p53/TP53 and MDM2, in vitro. The relevance of the protein lysine acetyltransferase activity is however unsure in vivo. Activates telomerase activity by stimulating the transcription of TERT, and may also regulate telomerase function by affecting the balance of telomerase subunit assembly, disassembly, and localization. Involved in the regulation of centrosome duplication by acetylating CENATAC during mitosis, promoting SASS6 proteasome degradation. Part of the small subunit (SSU) processome, first precursor of the small eukaryotic ribosomal subunit. During the assembly of the SSU processome in the nucleolus, many ribosome biogenesis factors, an RNA chaperone and ribosomal proteins associate with the nascent pre-rRNA and work in concert to generate RNA folding, modifications, rearrangements and cleavage as well as targeted degradation of pre-ribosomal RNA by the RNA exosome. This chain is RNA cytidine acetyltransferase, found in Mus musculus (Mouse).